Reading from the N-terminus, the 494-residue chain is Cobyric acid synthase (494 aa).

The GATase cobBQ-type domain occupies 254-453 (KQTVAVIAYP…LHGLFEDPGA (200 aa)). Catalysis depends on Cys338, which acts as the Nucleophile. His445 is a catalytic residue.

It belongs to the CobB/CobQ family. CobQ subfamily.

The protein operates within cofactor biosynthesis; adenosylcobalamin biosynthesis. In terms of biological role, catalyzes amidations at positions B, D, E, and G on adenosylcobyrinic A,C-diamide. NH(2) groups are provided by glutamine, and one molecule of ATP is hydrogenolyzed for each amidation. The protein is Cobyric acid synthase of Albidiferax ferrireducens (strain ATCC BAA-621 / DSM 15236 / T118) (Rhodoferax ferrireducens).